The chain runs to 452 residues: Peptidase M20 domain-containing protein SMAC_03666.2 (452 aa).

The signal sequence occupies residues Met1–His28. Residue Asn140 is glycosylated (N-linked (GlcNAc...) asparagine). Asp186 lines the Zn(2+) pocket. Glu220 serves as the catalytic Proton acceptor. Residue Glu221 coordinates Zn(2+). Asn315 carries N-linked (GlcNAc...) asparagine glycosylation.

This sequence belongs to the peptidase M20A family. Zn(2+) is required as a cofactor.

Its subcellular location is the secreted. This chain is Peptidase M20 domain-containing protein SMAC_03666.2, found in Sordaria macrospora (strain ATCC MYA-333 / DSM 997 / K(L3346) / K-hell).